A 648-amino-acid chain; its full sequence is Macrolide export ATP-binding/permease protein MacB (648 aa).

The 239-residue stretch at 5–243 (LELKDIRRSY…AGGTEPVVNT (239 aa)) folds into the ABC transporter domain. ATP is bound at residue 41–48 (GASGSGKS). 4 helical membrane passes run 273–293 (LLTMLGIIIGIASVVSIVVVG), 523–543 (LFLTLVAVISLVVGGIGVMNI), 576–596 (AVLVCLVGGALGITLSLLIAF), and 600–620 (LFLPGWEIGFSPLALLLAFLC).

This sequence belongs to the ABC transporter superfamily. Macrolide exporter (TC 3.A.1.122) family. As to quaternary structure, homodimer. Part of the tripartite efflux system MacAB-TolC, which is composed of an inner membrane transporter, MacB, a periplasmic membrane fusion protein, MacA, and an outer membrane component, TolC. The complex forms a large protein conduit and can translocate molecules across both the inner and outer membranes. Interacts with MacA.

Its subcellular location is the cell inner membrane. Part of the tripartite efflux system MacAB-TolC. MacB is a non-canonical ABC transporter that contains transmembrane domains (TMD), which form a pore in the inner membrane, and an ATP-binding domain (NBD), which is responsible for energy generation. Confers resistance against macrolides. The polypeptide is Macrolide export ATP-binding/permease protein MacB (Shigella boydii serotype 4 (strain Sb227)).